The chain runs to 107 residues: Ribosome-associated factor Y (107 aa).

The tract at residues 85–107 is disordered; it reads LNKLQHKSESRRADERLKDSFEN.

Associates mainly with 70S ribosomes.

Its function is as follows. During stationary phase, prevents 70S dimer formation, probably in order to regulate translation efficiency during transition between the exponential and the stationary phases. In addition, during environmental stress such as cold shock or excessive cell density at stationary phase, stabilizes the 70S ribosome against dissociation, inhibits translation initiation and increase translation accuracy. When normal growth conditions are restored, is quickly released from the ribosome. In Haemophilus influenzae (strain ATCC 51907 / DSM 11121 / KW20 / Rd), this protein is Ribosome-associated factor Y.